We begin with the raw amino-acid sequence, 363 residues long: UDP-3-O-acylglucosamine N-acyltransferase (363 aa).

The Proton acceptor role is filled by His-237. The segment at 338-363 (EQNSTDRAPNAKMLEVGVDPETTCSS) is disordered.

It belongs to the transferase hexapeptide repeat family. LpxD subfamily. As to quaternary structure, homotrimer.

The catalysed reaction is a UDP-3-O-[(3R)-3-hydroxyacyl]-alpha-D-glucosamine + a (3R)-hydroxyacyl-[ACP] = a UDP-2-N,3-O-bis[(3R)-3-hydroxyacyl]-alpha-D-glucosamine + holo-[ACP] + H(+). The protein operates within bacterial outer membrane biogenesis; LPS lipid A biosynthesis. In terms of biological role, catalyzes the N-acylation of UDP-3-O-acylglucosamine using 3-hydroxyacyl-ACP as the acyl donor. Is involved in the biosynthesis of lipid A, a phosphorylated glycolipid that anchors the lipopolysaccharide to the outer membrane of the cell. This chain is UDP-3-O-acylglucosamine N-acyltransferase, found in Synechococcus sp. (strain JA-2-3B'a(2-13)) (Cyanobacteria bacterium Yellowstone B-Prime).